We begin with the raw amino-acid sequence, 494 residues long: Glycosyl hydrolase family 109 protein (494 aa).

Disordered regions lie at residues 1–35 (MNDA…LRTT) and 59–86 (EAAQ…MAGV). The tat-type signal signal peptide spans 1-55 (MNDAAPQNPGQDEAKGTGEKDNGGSMSPRSALRTTAGVAGAGLGLSALGTGTASA). The span at 12 to 22 (DEAKGTGEKDN) shows a compositional bias: basic and acidic residues. NAD(+)-binding positions include 103–104 (NR), Asp-125, 174–177 (WDFH), 194–195 (EC), and Asn-223. Substrate contacts are provided by residues Tyr-252, Arg-271, 283–286 (YPNH), and Tyr-365. An NAD(+)-binding site is contributed by Tyr-283. Residues 463–494 (KANGKPQQIPDFTRGEWKKSRPGTDSEKPSEP) form a disordered region. The span at 475–494 (TRGEWKKSRPGTDSEKPSEP) shows a compositional bias: basic and acidic residues.

It belongs to the Gfo/Idh/MocA family. Glycosyl hydrolase 109 subfamily. It depends on NAD(+) as a cofactor. In terms of processing, predicted to be exported by the Tat system. The position of the signal peptide cleavage has not been experimentally proven.

Glycosidase. The polypeptide is Glycosyl hydrolase family 109 protein (Streptomyces niveus (Streptomyces spheroides)).